Here is a 171-residue protein sequence, read N- to C-terminus: Shikimate kinase (171 aa).

14-19 (GAGKST) contacts ATP. S18 contributes to the Mg(2+) binding site. Residues D36, R60, and G82 each contribute to the substrate site. R120 serves as a coordination point for ATP. A substrate-binding site is contributed by R139. Q156 contributes to the ATP binding site.

It belongs to the shikimate kinase family. As to quaternary structure, monomer. Mg(2+) serves as cofactor.

It localises to the cytoplasm. It carries out the reaction shikimate + ATP = 3-phosphoshikimate + ADP + H(+). It participates in metabolic intermediate biosynthesis; chorismate biosynthesis; chorismate from D-erythrose 4-phosphate and phosphoenolpyruvate: step 5/7. In terms of biological role, catalyzes the specific phosphorylation of the 3-hydroxyl group of shikimic acid using ATP as a cosubstrate. This chain is Shikimate kinase, found in Pseudoalteromonas atlantica (strain T6c / ATCC BAA-1087).